The chain runs to 582 residues: uncharacterized protein (582 aa).

A helical membrane pass occupies residues 20 to 40 (GFWALGLFGAAINAFSAVLIV).

The protein localises to the membrane. This is an uncharacterized protein from Mycoplasma pneumoniae (strain ATCC 29342 / M129 / Subtype 1) (Mycoplasmoides pneumoniae).